Here is a 79-residue protein sequence, read N- to C-terminus: MNCYLILTVALLLTSAMTGTTTAGQLNKKGVTLREDDGFPCNAGNCACLPLDSYSYTCQSPTSSTANCEGNECVSEADW.

The first 23 residues, M1 to A23, serve as a signal peptide directing secretion. Positions G24 to L33 are excised as a propeptide. 3 disulfides stabilise this stretch: C41-C58, C46-C68, and C48-C73.

In terms of tissue distribution, expressed by the venom duct.

It is found in the secreted. Probable neurotoxin with unknown target. Possibly targets ion channels. This is Conotoxin Cal9.2a from Californiconus californicus (California cone).